The following is a 262-amino-acid chain: Cytochrome c oxidase subunit 3 (262 aa).

7 consecutive transmembrane segments (helical) span residues 11 to 31, 32 to 52, 83 to 103, 125 to 147, 160 to 180, 198 to 218, and 240 to 260; these read LVEP…LTVG, LVMW…VMIV, GMVL…WAFF, LNAF…TVTW, AIQS…LQAW, FFVA…FLMV, and AWYW…IYWW.

This sequence belongs to the cytochrome c oxidase subunit 3 family. In terms of assembly, component of the cytochrome c oxidase (complex IV, CIV), a multisubunit enzyme composed of a catalytic core of 3 subunits and several supernumerary subunits. The complex exists as a monomer or a dimer and forms supercomplexes (SCs) in the inner mitochondrial membrane with ubiquinol-cytochrome c oxidoreductase (cytochrome b-c1 complex, complex III, CIII).

Its subcellular location is the mitochondrion inner membrane. It catalyses the reaction 4 Fe(II)-[cytochrome c] + O2 + 8 H(+)(in) = 4 Fe(III)-[cytochrome c] + 2 H2O + 4 H(+)(out). Functionally, component of the cytochrome c oxidase, the last enzyme in the mitochondrial electron transport chain which drives oxidative phosphorylation. The respiratory chain contains 3 multisubunit complexes succinate dehydrogenase (complex II, CII), ubiquinol-cytochrome c oxidoreductase (cytochrome b-c1 complex, complex III, CIII) and cytochrome c oxidase (complex IV, CIV), that cooperate to transfer electrons derived from NADH and succinate to molecular oxygen, creating an electrochemical gradient over the inner membrane that drives transmembrane transport and the ATP synthase. Cytochrome c oxidase is the component of the respiratory chain that catalyzes the reduction of oxygen to water. Electrons originating from reduced cytochrome c in the intermembrane space (IMS) are transferred via the dinuclear copper A center (CU(A)) of subunit 2 and heme A of subunit 1 to the active site in subunit 1, a binuclear center (BNC) formed by heme A3 and copper B (CU(B)). The BNC reduces molecular oxygen to 2 water molecules using 4 electrons from cytochrome c in the IMS and 4 protons from the mitochondrial matrix. The sequence is that of Cytochrome c oxidase subunit 3 (COIII) from Branchiostoma floridae (Florida lancelet).